The following is a 66-amino-acid chain: Xenoxin-3 (66 aa).

Intrachain disulfides connect cysteine 3-cysteine 24, cysteine 17-cysteine 37, cysteine 43-cysteine 58, and cysteine 59-cysteine 64.

As to expression, expressed by the skin dorsal glands.

It localises to the secreted. Lacks alpha-neurotoxic activity, has apparently no antibacterial activity, nor anti-coagulant potency. The protein is Xenoxin-3 of Xenopus laevis (African clawed frog).